The primary structure comprises 326 residues: Ribonuclease Z (326 aa).

Residues histidine 62, histidine 64, aspartate 66, histidine 67, histidine 140, aspartate 211, and histidine 269 each coordinate Zn(2+). The active-site Proton acceptor is the aspartate 66.

This sequence belongs to the RNase Z family. In terms of assembly, homodimer. The cofactor is Zn(2+).

It catalyses the reaction Endonucleolytic cleavage of RNA, removing extra 3' nucleotides from tRNA precursor, generating 3' termini of tRNAs. A 3'-hydroxy group is left at the tRNA terminus and a 5'-phosphoryl group is left at the trailer molecule.. Functionally, zinc phosphodiesterase, which displays some tRNA 3'-processing endonuclease activity. Probably involved in tRNA maturation, by removing a 3'-trailer from precursor tRNA. The sequence is that of Ribonuclease Z from Synechocystis sp. (strain ATCC 27184 / PCC 6803 / Kazusa).